The following is a 280-amino-acid chain: Vitamin B12-binding protein (280 aa).

The first 27 residues, 1–27 (MMPLGLFPLPRAAAVLLISLLTLPAQA), serve as a signal peptide directing secretion. The Fe/B12 periplasmic-binding domain maps to 30-277 (RVISLSPSTT…QMASIPTPVA (248 aa)). Tyrosine 57 contacts cyanocob(III)alamin. Cysteine 190 and cysteine 266 are oxidised to a cystine.

It belongs to the BtuF family. In terms of assembly, the complex is composed of two ATP-binding proteins (BtuD), two transmembrane proteins (BtuC) and a solute-binding protein (BtuF).

It is found in the periplasm. Its function is as follows. Part of the ABC transporter complex BtuCDF involved in vitamin B12 import. Binds vitamin B12 and delivers it to the periplasmic surface of BtuC. The chain is Vitamin B12-binding protein from Yersinia pseudotuberculosis serotype O:3 (strain YPIII).